The primary structure comprises 284 residues: Tropomyosin (284 aa).

Residues 1–284 adopt a coiled-coil conformation; the sequence is MDAIKKKMQA…DMTFTELIGN (284 aa).

This sequence belongs to the tropomyosin family. In terms of assembly, homodimer.

Tropomyosin, in association with the troponin complex, plays a central role in the calcium dependent regulation of muscle contraction. This chain is Tropomyosin, found in Blattella germanica (German cockroach).